The sequence spans 20 residues: Pregnancy-associated glycoprotein 71D (20 aa).

An N-linked (GlcNAc...) asparagine glycan is attached at N4.

Belongs to the peptidase A1 family. As to expression, chorionic epithelium (trophectoderm) and placental cotyledons.

The protein resides in the secreted. Its subcellular location is the extracellular space. The polypeptide is Pregnancy-associated glycoprotein 71D (Bison bonasus (European bison)).